Reading from the N-terminus, the 1400-residue chain is DNA-directed RNA polymerase subunit beta' (1400 aa).

Zn(2+) contacts are provided by Cys-71, Cys-73, Cys-86, and Cys-89. Mg(2+) contacts are provided by Asp-462, Asp-464, and Asp-466. Zn(2+)-binding residues include Cys-811, Cys-885, Cys-892, and Cys-895.

It belongs to the RNA polymerase beta' chain family. The RNAP catalytic core consists of 2 alpha, 1 beta, 1 beta' and 1 omega subunit. When a sigma factor is associated with the core the holoenzyme is formed, which can initiate transcription. Mg(2+) is required as a cofactor. It depends on Zn(2+) as a cofactor.

It catalyses the reaction RNA(n) + a ribonucleoside 5'-triphosphate = RNA(n+1) + diphosphate. DNA-dependent RNA polymerase catalyzes the transcription of DNA into RNA using the four ribonucleoside triphosphates as substrates. The sequence is that of DNA-directed RNA polymerase subunit beta' from Brucella anthropi (strain ATCC 49188 / DSM 6882 / CCUG 24695 / JCM 21032 / LMG 3331 / NBRC 15819 / NCTC 12168 / Alc 37) (Ochrobactrum anthropi).